The following is a 43-amino-acid chain: Protein PsbN (43 aa).

The chain crosses the membrane as a helical span at residues 7 to 29 (LSIALAAVCIGVTGYSIYLSFGP).

This sequence belongs to the PsbN family.

It localises to the cellular thylakoid membrane. May play a role in photosystem I and II biogenesis. The chain is Protein PsbN from Thermosynechococcus vestitus (strain NIES-2133 / IAM M-273 / BP-1).